Here is a 147-residue protein sequence, read N- to C-terminus: T-DNA border endonuclease VirD1 (147 aa).

Functionally, tumor formation by A.tumefaciens involves the transfer and integration of a defined segment (T-DNA) of Ti plasmid DNA into the plant nuclear genome. The virD operon encodes a site-specific endonuclease that cleaves at a unique site within both 24 bp direct repeats flanking the T-DNA. This Rhizobium radiobacter (Agrobacterium tumefaciens) protein is T-DNA border endonuclease VirD1 (virD1).